We begin with the raw amino-acid sequence, 239 residues long: MPIKKPCLKLNLDSLNVVRSEIPQMLSANERLKNNFNILYNQIRQYPAYYFKVASNVPNYSDICQFFSVMYQGFQIVNHSGDVFIHACRENPQSKGDFVGDKFHISIAREQVPLAFQILSGLLFSEDSPIDKWKITDMNRVSQQSRVGIGAQFTLYVKSDQECSQYSALLLHKIRQFIMCLESNLLRSKIAPGEYPASDVRPEDWKYVSYRNELRSDRNGSERQEQMLREEPFYRLMIE.

Residue histidine 104 is the Proton donor of the active site. Catalysis depends on lysine 134, which acts as the Proton acceptor.

The protein belongs to the phosphothreonine lyase family.

It is found in the secreted. Catalyzes the removal of the phosphate group from the phosphothreonine in the mitogen-activated protein kinases such as MAPK2/ERK2, MAPK3/ERK1, MAPK8 and MAPK14 in an irreversible reaction, thus preventing the downstream phosphorylation of histone H3. This epigenetic modification results in inhibition of the transcription of a specific subset of pro-inflammatory genes, and ultimately to a reduced immune response against the invading pathogen. The diminished immune response enhances the bacterium's ability to disseminate and multiply within the host. In Shigella dysenteriae serotype 1 (strain Sd197), this protein is Phosphothreonine lyase OspF (ospF).